The primary structure comprises 382 residues: Alkanesulfonate monooxygenase (382 aa).

Belongs to the SsuD family. In terms of assembly, homotetramer.

The catalysed reaction is an alkanesulfonate + FMNH2 + O2 = an aldehyde + FMN + sulfite + H2O + 2 H(+). In terms of biological role, catalyzes the desulfonation of aliphatic sulfonates. In Yersinia pseudotuberculosis serotype O:1b (strain IP 31758), this protein is Alkanesulfonate monooxygenase.